A 78-amino-acid polypeptide reads, in one-letter code: Large ribosomal subunit protein bL28 (78 aa).

The disordered stretch occupies residues 1–20 (MSRVCQVTGKRPVTGNNRSH).

This sequence belongs to the bacterial ribosomal protein bL28 family.

In Photobacterium profundum (strain SS9), this protein is Large ribosomal subunit protein bL28.